Here is a 269-residue protein sequence, read N- to C-terminus: MVRIAIAGAAGRMGRNLVKAAHHNSEASVGAGSERPESSLVGVDVGELCGEGRFDVALVDDLSKAVEEFDVIVDFTAPVSTLANIELCKRHGKKLIIGTTGFSEEEKLVIDAASKEMAIVMAPNYSVGVNLVFKLLEKAAKVMGDYCDVEIVEAHHRHKVDAPSGTAIGMGEAIAGAMGNELNDVAVWSREGITGERTKDEIGFATIRAGDIIGEHTAMFADIGERVEITHKATDRMTFANGAIKAAVWLNDKPAGFYTMTDVLGLNDL.

NAD(+)-binding positions include 8–13 (GAAGRM) and glutamate 34. Arginine 35 provides a ligand contact to NADP(+). NAD(+)-binding positions include 98-100 (GTT) and 122-125 (APNY). Histidine 155 serves as the catalytic Proton donor/acceptor. Histidine 156 provides a ligand contact to (S)-2,3,4,5-tetrahydrodipicolinate. Catalysis depends on lysine 159, which acts as the Proton donor. 165 to 166 (GT) serves as a coordination point for (S)-2,3,4,5-tetrahydrodipicolinate.

This sequence belongs to the DapB family.

Its subcellular location is the cytoplasm. It carries out the reaction (S)-2,3,4,5-tetrahydrodipicolinate + NAD(+) + H2O = (2S,4S)-4-hydroxy-2,3,4,5-tetrahydrodipicolinate + NADH + H(+). It catalyses the reaction (S)-2,3,4,5-tetrahydrodipicolinate + NADP(+) + H2O = (2S,4S)-4-hydroxy-2,3,4,5-tetrahydrodipicolinate + NADPH + H(+). It participates in amino-acid biosynthesis; L-lysine biosynthesis via DAP pathway; (S)-tetrahydrodipicolinate from L-aspartate: step 4/4. Its function is as follows. Catalyzes the conversion of 4-hydroxy-tetrahydrodipicolinate (HTPA) to tetrahydrodipicolinate. The chain is 4-hydroxy-tetrahydrodipicolinate reductase from Vibrio atlanticus (strain LGP32) (Vibrio splendidus (strain Mel32)).